Here is a 64-residue protein sequence, read N- to C-terminus: Large ribosomal subunit protein bL28 (64 aa).

It belongs to the bacterial ribosomal protein bL28 family.

The polypeptide is Large ribosomal subunit protein bL28 (Campylobacter lari (strain RM2100 / D67 / ATCC BAA-1060)).